The chain runs to 441 residues: Glutamate-1-semialdehyde 2,1-aminomutase (441 aa).

Lys279 bears the N6-(pyridoxal phosphate)lysine mark.

This sequence belongs to the class-III pyridoxal-phosphate-dependent aminotransferase family. HemL subfamily. As to quaternary structure, homodimer. The cofactor is pyridoxal 5'-phosphate.

The protein resides in the cytoplasm. The catalysed reaction is (S)-4-amino-5-oxopentanoate = 5-aminolevulinate. It functions in the pathway porphyrin-containing compound metabolism; protoporphyrin-IX biosynthesis; 5-aminolevulinate from L-glutamyl-tRNA(Glu): step 2/2. The polypeptide is Glutamate-1-semialdehyde 2,1-aminomutase (Leptospira borgpetersenii serovar Hardjo-bovis (strain JB197)).